The chain runs to 474 residues: tRNA modification GTPase MnmE (474 aa).

3 residues coordinate (6S)-5-formyl-5,6,7,8-tetrahydrofolate: Arg35, Glu92, and Lys135. Residues 231–396 enclose the TrmE-type G domain; sequence GLHVVLAGQP…LRAALLEIAG (166 aa). Residue Asn241 coordinates K(+). GTP contacts are provided by residues 241–246, 260–266, 285–288, and 377–379; these read NVGKSS, TPIAGTT, DTAG, and SAR. Ser245 is a binding site for Mg(2+). K(+) is bound by residues Thr260, Ile262, and Thr265. Position 266 (Thr266) interacts with Mg(2+). Position 474 (Lys474) interacts with (6S)-5-formyl-5,6,7,8-tetrahydrofolate.

It belongs to the TRAFAC class TrmE-Era-EngA-EngB-Septin-like GTPase superfamily. TrmE GTPase family. In terms of assembly, homodimer. Heterotetramer of two MnmE and two MnmG subunits. K(+) is required as a cofactor.

Its subcellular location is the cytoplasm. In terms of biological role, exhibits a very high intrinsic GTPase hydrolysis rate. Involved in the addition of a carboxymethylaminomethyl (cmnm) group at the wobble position (U34) of certain tRNAs, forming tRNA-cmnm(5)s(2)U34. The chain is tRNA modification GTPase MnmE from Ralstonia nicotianae (strain ATCC BAA-1114 / GMI1000) (Ralstonia solanacearum).